Reading from the N-terminus, the 612-residue chain is Putative zinc metalloproteinase C607.06c (612 aa).

A Zn(2+)-binding site is contributed by His-303. Glu-304 is a catalytic residue. 2 residues coordinate Zn(2+): His-307 and His-313. The Jacalin-type lectin domain maps to 477 to 612 (VYRSERYGLR…FMDSIGFFIK (136 aa)).

The protein belongs to the peptidase M10B family. The cofactor is Zn(2+).

The protein is Putative zinc metalloproteinase C607.06c of Schizosaccharomyces pombe (strain 972 / ATCC 24843) (Fission yeast).